Reading from the N-terminus, the 179-residue chain is ATP synthase subunit delta (179 aa).

This sequence belongs to the ATPase delta chain family. As to quaternary structure, F-type ATPases have 2 components, F(1) - the catalytic core - and F(0) - the membrane proton channel. F(1) has five subunits: alpha(3), beta(3), gamma(1), delta(1), epsilon(1). F(0) has three main subunits: a(1), b(2) and c(10-14). The alpha and beta chains form an alternating ring which encloses part of the gamma chain. F(1) is attached to F(0) by a central stalk formed by the gamma and epsilon chains, while a peripheral stalk is formed by the delta and b chains.

It is found in the cell inner membrane. F(1)F(0) ATP synthase produces ATP from ADP in the presence of a proton or sodium gradient. F-type ATPases consist of two structural domains, F(1) containing the extramembraneous catalytic core and F(0) containing the membrane proton channel, linked together by a central stalk and a peripheral stalk. During catalysis, ATP synthesis in the catalytic domain of F(1) is coupled via a rotary mechanism of the central stalk subunits to proton translocation. Functionally, this protein is part of the stalk that links CF(0) to CF(1). It either transmits conformational changes from CF(0) to CF(1) or is implicated in proton conduction. This is ATP synthase subunit delta from Paraburkholderia phymatum (strain DSM 17167 / CIP 108236 / LMG 21445 / STM815) (Burkholderia phymatum).